A 223-amino-acid polypeptide reads, in one-letter code: Deoxyribose-phosphate aldolase (223 aa).

Asp89 serves as the catalytic Proton donor/acceptor. The Schiff-base intermediate with acetaldehyde role is filled by Lys152. The Proton donor/acceptor role is filled by Lys181.

Belongs to the DeoC/FbaB aldolase family. DeoC type 1 subfamily.

Its subcellular location is the cytoplasm. The catalysed reaction is 2-deoxy-D-ribose 5-phosphate = D-glyceraldehyde 3-phosphate + acetaldehyde. Its pathway is carbohydrate degradation; 2-deoxy-D-ribose 1-phosphate degradation; D-glyceraldehyde 3-phosphate and acetaldehyde from 2-deoxy-alpha-D-ribose 1-phosphate: step 2/2. Catalyzes a reversible aldol reaction between acetaldehyde and D-glyceraldehyde 3-phosphate to generate 2-deoxy-D-ribose 5-phosphate. In Bacillus cereus (strain AH187), this protein is Deoxyribose-phosphate aldolase.